The sequence spans 91 residues: UPF0298 protein OB1449 (91 aa).

This sequence belongs to the UPF0298 family.

It localises to the cytoplasm. This chain is UPF0298 protein OB1449, found in Oceanobacillus iheyensis (strain DSM 14371 / CIP 107618 / JCM 11309 / KCTC 3954 / HTE831).